We begin with the raw amino-acid sequence, 962 residues long: Putative primase C962R (962 aa).

Residues 607–775 enclose the SF3 helicase domain; that stretch reads ELDARLWIMF…PDPNNSYEKK (169 aa). Residue 636-643 participates in ATP binding; that stretch reads GGGCNGKT.

This sequence belongs to the asfivirus helicase C962R family.

This is Putative primase C962R from African swine fever virus (isolate Pig/Kenya/KEN-50/1950) (ASFV).